A 203-amino-acid polypeptide reads, in one-letter code: dTTP/UTP pyrophosphatase (203 aa).

The active-site Proton acceptor is Asp-74.

This sequence belongs to the Maf family. YhdE subfamily. A divalent metal cation is required as a cofactor.

It localises to the cytoplasm. The catalysed reaction is dTTP + H2O = dTMP + diphosphate + H(+). The enzyme catalyses UTP + H2O = UMP + diphosphate + H(+). Functionally, nucleoside triphosphate pyrophosphatase that hydrolyzes dTTP and UTP. May have a dual role in cell division arrest and in preventing the incorporation of modified nucleotides into cellular nucleic acids. In Treponema denticola (strain ATCC 35405 / DSM 14222 / CIP 103919 / JCM 8153 / KCTC 15104), this protein is dTTP/UTP pyrophosphatase.